We begin with the raw amino-acid sequence, 918 residues long: Glutamate receptor 2.5 (918 aa).

The N-terminal stretch at 1 to 30 is a signal peptide; sequence MSLFHHLVSRFLSLWLLIFLVFLVLSLGKS. The Extracellular segment spans residues 31 to 586; the sequence is QKEALQVKVG…WVFLKPLTKE (556 aa). Residues asparagine 46, asparagine 58, asparagine 122, asparagine 336, asparagine 340, and asparagine 546 are each glycosylated (N-linked (GlcNAc...) asparagine). A helical transmembrane segment spans residues 587-607; sequence LWLVTAASFLYIGIMVWIFEY. Over 608-616 the chain is Cytoplasmic; that stretch reads QADEEFREQ. Residues 617 to 637 form a helical membrane-spanning segment; that stretch reads MIIDKISSVFYFSFSTLFFAH. The Cytoplasmic portion of the chain corresponds to 638–647; the sequence is RRPSESFFTR. The chain crosses the membrane as a helical span at residues 648–668; it reads VLVVVWCFVLLILTQSYTATL. Residues 669-828 are Extracellular-facing; it reads TSMLTVQELR…DSPIQLDHHS (160 aa). N-linked (GlcNAc...) asparagine glycosylation occurs at asparagine 791. The chain crosses the membrane as a helical span at residues 829-849; it reads FEALFLIVFVVSVILLLLMLA. The Cytoplasmic segment spans residues 850-918; sequence SRGYQERQHN…VAPLSRLKSA (69 aa). The segment at 857 to 881 is disordered; sequence QHNASPNLPNDQANAAQEEVNEEGN. Residues 866-881 are compositionally biased toward low complexity; that stretch reads NDQANAAQEEVNEEGN.

This sequence belongs to the glutamate-gated ion channel (TC 1.A.10.1) family. In terms of assembly, may form heteromers. In terms of tissue distribution, expressed predominantly in roots.

It is found in the membrane. Functionally, glutamate-gated receptor that probably acts as a non-selective cation channel. May be involved in light-signal transduction and calcium homeostasis via the regulation of calcium influx into cells. The polypeptide is Glutamate receptor 2.5 (GLR2.5) (Arabidopsis thaliana (Mouse-ear cress)).